The following is a 279-amino-acid chain: Glutamate racemase (279 aa).

Substrate is bound by residues 13-14 (DS) and 45-46 (YG). Cys76 serves as the catalytic Proton donor/acceptor. 77–78 (NT) contributes to the substrate binding site. Cys185 serves as the catalytic Proton donor/acceptor. 186–187 (TH) is a binding site for substrate.

Belongs to the aspartate/glutamate racemases family.

It carries out the reaction L-glutamate = D-glutamate. The protein operates within cell wall biogenesis; peptidoglycan biosynthesis. Functionally, provides the (R)-glutamate required for cell wall biosynthesis. This is Glutamate racemase from Picosynechococcus sp. (strain ATCC 27264 / PCC 7002 / PR-6) (Agmenellum quadruplicatum).